Reading from the N-terminus, the 283-residue chain is Putative replication protein XF_b0001 (283 aa).

This Xylella fastidiosa (strain 9a5c) protein is Putative replication protein XF_b0001.